The sequence spans 505 residues: RNA-splicing ligase RtcB homolog (505 aa).

Mn(2+) is bound by residues D119, C122, H227, H259, and H353. 226–230 contacts GMP; sequence NHYAE. GMP-binding positions include 353–354, 402–405, S409, 428–431, and K504; these read HN, GGTM, and HGAG. H428 acts as the GMP-histidine intermediate in catalysis.

This sequence belongs to the RtcB family. As to quaternary structure, catalytic component of the tRNA-splicing ligase complex. The cofactor is Mn(2+).

Its subcellular location is the nucleus. It localises to the cytoplasm. It carries out the reaction a 3'-end 3'-phospho-ribonucleotide-RNA + a 5'-end dephospho-ribonucleoside-RNA + GTP = a ribonucleotidyl-ribonucleotide-RNA + GMP + diphosphate. The catalysed reaction is a 3'-end 2',3'-cyclophospho-ribonucleotide-RNA + a 5'-end dephospho-ribonucleoside-RNA + GTP + H2O = a ribonucleotidyl-ribonucleotide-RNA + GMP + diphosphate + H(+). In terms of biological role, catalytic subunit of the tRNA-splicing ligase complex that acts by directly joining spliced tRNA halves to mature-sized tRNAs by incorporating the precursor-derived splice junction phosphate into the mature tRNA as a canonical 3',5'-phosphodiester. May act as an RNA ligase with broad substrate specificity, and may function toward other RNAs. The protein is RNA-splicing ligase RtcB homolog of Xenopus tropicalis (Western clawed frog).